The chain runs to 534 residues: CTP synthase (534 aa).

The amidoligase domain stretch occupies residues 1-267 (MTKYIFVTGG…DQIVCDHLKL (267 aa)). Ser-13 is a binding site for CTP. Position 13 (Ser-13) interacts with UTP. Position 14-19 (14-19 (SIGKGI)) interacts with ATP. An L-glutamine-binding site is contributed by Tyr-54. An ATP-binding site is contributed by Asp-71. Residues Asp-71 and Glu-141 each coordinate Mg(2+). CTP contacts are provided by residues 148-150 (DIE), 188-193 (KTKPTQ), and Lys-224. UTP is bound by residues 188–193 (KTKPTQ) and Lys-224. 240–242 (RNV) provides a ligand contact to ATP. In terms of domain architecture, Glutamine amidotransferase type-1 spans 292-534 (KIALVGKYVE…FVTAAIKNSN (243 aa)). An L-glutamine-binding site is contributed by Gly-354. Cys-381 acts as the Nucleophile; for glutamine hydrolysis in catalysis. Residues 382 to 385 (LGMQ), Glu-405, and Arg-463 contribute to the L-glutamine site. Catalysis depends on residues His-508 and Glu-510.

This sequence belongs to the CTP synthase family. In terms of assembly, homotetramer.

It catalyses the reaction UTP + L-glutamine + ATP + H2O = CTP + L-glutamate + ADP + phosphate + 2 H(+). It carries out the reaction L-glutamine + H2O = L-glutamate + NH4(+). The enzyme catalyses UTP + NH4(+) + ATP = CTP + ADP + phosphate + 2 H(+). It functions in the pathway pyrimidine metabolism; CTP biosynthesis via de novo pathway; CTP from UDP: step 2/2. With respect to regulation, allosterically activated by GTP, when glutamine is the substrate; GTP has no effect on the reaction when ammonia is the substrate. The allosteric effector GTP functions by stabilizing the protein conformation that binds the tetrahedral intermediate(s) formed during glutamine hydrolysis. Inhibited by the product CTP, via allosteric rather than competitive inhibition. In terms of biological role, catalyzes the ATP-dependent amination of UTP to CTP with either L-glutamine or ammonia as the source of nitrogen. Regulates intracellular CTP levels through interactions with the four ribonucleotide triphosphates. In Streptococcus pyogenes serotype M28 (strain MGAS6180), this protein is CTP synthase.